Reading from the N-terminus, the 431-residue chain is MSVRGYSGVQVISSRKHRSMSRLPTVLLLLASAAVLAAGGQEATEDPFADETDQCQISVSAETMKSLHGGSMQPDGTCDNLWESFLSQFHQVRENLTACQERAAAGPAPDPSSQFCQQLLDDAQRQMEQEHRQYAATLEEQLHAAQQETQQEQEMKKALQKQLDALTDSRNALYIDLLLANIAIGETKQALSYYNLMPASMPIDKLHEQIVRFVYRVTIYQDQRLLNLMRFVRDIPSVEERRSLYQLAQREVQKRPSQRDGYVAAVYALSVREDLPVYQANRQLYDDLVRQSETRLKEQVANGNFKQAAELAARQPQHFRQLQTSLATIELKHWRKFDRFVPYANALPQPAQRLEVLRVLLSQIGDREKKTSHKYLVKAARQFDICEQFIGRGKVDQAVKKQLEELRGKFATFAKGKNYQHYLSESRKSSG.

A signal peptide spans M1–G39. N95 is a glycosylation site (N-linked (GlcNAc...) asparagine). The stretch at L120 to S169 forms a coiled coil.

Homodimer; disulfide-linked. As to quaternary structure, (Microbial infection) Interacts with Plasmodium berghei TRAP (via integrin-like A-domain); the interaction probably promotes sporozoite invasion of salivary gland. In terms of tissue distribution, female saliva (at protein level). Female salivary gland (at protein level).

The protein resides in the secreted. Functionally, (Microbial infection) Facilitates invasion of mosquito salivary glands by Plasmodium yoelii sporozoites. In terms of biological role, (Microbial infection) Facilitates invasion of mosquito salivary glands by Plasmodium falciparum sporozoites. Its function is as follows. (Microbial infection) Probably facilitates invasion of mosquito salivary glands by Plasmodium berghei sporozoites. This Anopheles gambiae (African malaria mosquito) protein is Saglin.